Reading from the N-terminus, the 339-residue chain is Uroporphyrinogen decarboxylase (339 aa).

Residues 21–25, Asp71, Tyr147, Ser202, and His315 contribute to the substrate site; that span reads RQAGR.

This sequence belongs to the uroporphyrinogen decarboxylase family. Homodimer.

It is found in the cytoplasm. The catalysed reaction is uroporphyrinogen III + 4 H(+) = coproporphyrinogen III + 4 CO2. The protein operates within porphyrin-containing compound metabolism; protoporphyrin-IX biosynthesis; coproporphyrinogen-III from 5-aminolevulinate: step 4/4. Its function is as follows. Catalyzes the decarboxylation of four acetate groups of uroporphyrinogen-III to yield coproporphyrinogen-III. This Helicobacter pylori (strain G27) protein is Uroporphyrinogen decarboxylase.